The sequence spans 259 residues: MNSKIEIIKIKAKKPINPTKIPGAKYVINQYIGCQYACKYCYARFMCKWYNYGKWGSWVVVKENLPDLIKNKHIKGKIYMSSVSDAYRPIEKDFKLTRNILKNIDKRAELSILTKSDLVLRDMDLFKKFSSIEVGLTINNFEGNLKKDIEPFSPSNEKRIDALKTLYENGIKNYAFISPIIPDLIDVEYIIGETKPFTNFYYFEFLNLKASREFKHYLEQNYPESYEIISNKTAFKRYIDEVINTIKKKDIAIKGICVH.

Positions 19-249 constitute a Radical SAM core domain; it reads TKIPGAKYVI…DEVINTIKKK (231 aa). [4Fe-4S] cluster contacts are provided by cysteine 34, cysteine 38, and cysteine 41.

[4Fe-4S] cluster serves as cofactor.

This is an uncharacterized protein from Methanocaldococcus jannaschii (strain ATCC 43067 / DSM 2661 / JAL-1 / JCM 10045 / NBRC 100440) (Methanococcus jannaschii).